A 168-amino-acid polypeptide reads, in one-letter code: Endoribonuclease YbeY (168 aa).

His126, His130, and His136 together coordinate Zn(2+).

The protein belongs to the endoribonuclease YbeY family. Zn(2+) serves as cofactor.

It localises to the cytoplasm. Its function is as follows. Single strand-specific metallo-endoribonuclease involved in late-stage 70S ribosome quality control and in maturation of the 3' terminus of the 16S rRNA. The chain is Endoribonuclease YbeY from Rhizobium meliloti (strain 1021) (Ensifer meliloti).